Here is a 110-residue protein sequence, read N- to C-terminus: UPF0060 membrane protein Pcryo_1341 (110 aa).

Transmembrane regions (helical) follow at residues 7–27 (VGLF…PYLW), 33–53 (SIWL…LLTL), 63–83 (AAYG…VDGI), and 87–107 (TWDI…MFAP).

The protein belongs to the UPF0060 family.

Its subcellular location is the cell inner membrane. The protein is UPF0060 membrane protein Pcryo_1341 of Psychrobacter cryohalolentis (strain ATCC BAA-1226 / DSM 17306 / VKM B-2378 / K5).